Reading from the N-terminus, the 116-residue chain is Non-specific lipid-transfer protein 1 (116 aa).

A signal peptide spans 1-25 (MARAQLVLVALVAALLLAAPHAAVA). 4 disulfides stabilise this stretch: Cys28/Cys75, Cys38/Cys52, Cys53/Cys98, and Cys73/Cys112.

The protein belongs to the plant LTP family. In terms of tissue distribution, aleurone (external part) of the seeds.

Its function is as follows. Plant non-specific lipid-transfer proteins transfer phospholipids as well as galactolipids across membranes. May play a role in wax or cutin deposition in the cell walls of expanding epidermal cells and certain secretory tissues. The polypeptide is Non-specific lipid-transfer protein 1 (LTP) (Oryza sativa subsp. indica (Rice)).